The primary structure comprises 141 residues: Putative pre-16S rRNA nuclease (141 aa).

This sequence belongs to the YqgF nuclease family.

The protein localises to the cytoplasm. Functionally, could be a nuclease involved in processing of the 5'-end of pre-16S rRNA. This Syntrophomonas wolfei subsp. wolfei (strain DSM 2245B / Goettingen) protein is Putative pre-16S rRNA nuclease.